The primary structure comprises 549 residues: Rhodopsin kinase grk7a (549 aa).

Residue serine 33 is modified to Phosphoserine. The region spanning 53-171 (FESLCEKQPI…QASPFFDKFL (119 aa)) is the RGS domain. The region spanning 186–449 (FYEFRTLGKG…NDDPRKHEWF (264 aa)) is the Protein kinase domain. Residues 192–200 (LGKGGFGEV) and lysine 215 contribute to the ATP site. Residue aspartate 311 is the Proton acceptor of the active site. An AGC-kinase C-terminal domain is found at 450-515 (KSINFARLEA…GAVSIAWQQE (66 aa)). Residues 522–549 (FDELSDPNRKESSGGSDDDKKSGTCTLL) form a disordered region. Positions 527–543 (DPNRKESSGGSDDDKKS) are enriched in basic and acidic residues. Position 546 is a cysteine methyl ester (cysteine 546). Cysteine 546 is lipidated: S-geranylgeranyl cysteine. Residues 547–549 (TLL) constitute a propeptide, removed in mature form.

It belongs to the protein kinase superfamily. AGC Ser/Thr protein kinase family. GPRK subfamily. Phosphorylation at Ser-33 is regulated by light and activated by cAMP.

Its subcellular location is the membrane. The catalysed reaction is L-threonyl-[rhodopsin] + ATP = O-phospho-L-threonyl-[rhodopsin] + ADP + H(+). It catalyses the reaction L-seryl-[rhodopsin] + ATP = O-phospho-L-seryl-[rhodopsin] + ADP + H(+). In terms of biological role, retina-specific kinase involved in the shutoff of the photoresponse and adaptation to changing light conditions via cone opsin phosphorylation, including rhodopsin (RHO). The protein is Rhodopsin kinase grk7a (grk7a) of Danio rerio (Zebrafish).